Reading from the N-terminus, the 272-residue chain is Putative phosphatase BU028/BU029 (272 aa).

D8 acts as the Nucleophile in catalysis. Residue D8 participates in Mg(2+) binding. A phosphate-binding site is contributed by L9. D10 is a binding site for Mg(2+). Phosphate contacts are provided by residues 42–43 and K191; that span reads SG. D214 lines the Mg(2+) pocket. Phosphate is bound at residue N217.

This sequence belongs to the HAD-like hydrolase superfamily. Cof family. It depends on Mg(2+) as a cofactor.

The chain is Putative phosphatase BU028/BU029 from Buchnera aphidicola subsp. Acyrthosiphon pisum (strain APS) (Acyrthosiphon pisum symbiotic bacterium).